Reading from the N-terminus, the 307-residue chain is Golgi to ER traffic protein 2 (307 aa).

Residues 1 to 173 lie on the Cytoplasmic side of the membrane; it reads MSDSTDSPAV…QAYDTYQQKL (173 aa). Over residues 41–52 the composition is skewed to polar residues; that stretch reads LSQGSSVKTTGV. Residues 41 to 73 form a disordered region; the sequence is LSQGSSVKTTGVKSVLDEPQPTATSSAIHDEDP. Residues 174 to 194 traverse the membrane as a helical segment; the sequence is WKSRFLVIRVVVTLFNFFYHY. Topologically, residues 195–220 are lumenal; sequence LNVPSFHASNYSYVRDLAQDEFPVRN. Residues 221–240 traverse the membrane as a helical segment; that stretch reads FFTWFAAFEVIIVLQYYTVF. Topologically, residues 241–284 are cytoplasmic; it reads HKLGLFHAANQNSMIMKLMSMGSMVLPQLNTYQPLVARFLGYYE. A helical transmembrane segment spans residues 285-305; sequence LFGIIFGDLSLVIVLFGLLSF. Residues 306–307 are Lumenal-facing; it reads TK.

Belongs to the GET2 family. Component of the Golgi to ER traffic (GET) complex, which is composed of GET1, GET2 and GET3. Within the complex, GET1 and GET2 form a heterotetramer which is stabilized by phosphatidylinositol binding and which binds to the GET3 homodimer.

It localises to the endoplasmic reticulum membrane. The protein localises to the golgi apparatus membrane. Its function is as follows. Required for the post-translational delivery of tail-anchored (TA) proteins to the endoplasmic reticulum. Together with GET1, acts as a membrane receptor for soluble GET3, which recognizes and selectively binds the transmembrane domain of TA proteins in the cytosol. The GET complex cooperates with the HDEL receptor ERD2 to mediate the ATP-dependent retrieval of resident ER proteins that contain a C-terminal H-D-E-L retention signal from the Golgi to the ER. The protein is Golgi to ER traffic protein 2 of Candida tropicalis (strain ATCC MYA-3404 / T1) (Yeast).